The sequence spans 36 residues: Amanexitide proprotein 1 (36 aa).

Residues 1–10 (MSDINTARLP) constitute a propeptide that is removed on maturation. A cross-link (cyclopeptide (Val-Pro)) is located at residues 11–19 (VFSLPVFFP). Positions 20 to 36 (FVSDDIQAVLTRGESLC) are excised as a propeptide.

It belongs to the MSDIN fungal toxin family. In terms of processing, processed by the macrocyclase-peptidase enzyme POPB to yield a toxic cyclic nonapeptide. POPB first removes 10 residues from the N-terminus. Conformational trapping of the remaining peptide forces the enzyme to release this intermediate rather than proceed to macrocyclization. The enzyme rebinds the remaining peptide in a different conformation and catalyzes macrocyclization of the N-terminal 9 residues. As to expression, expressed in basidiocarps.

Its function is as follows. Cyclic nonapeptide that belongs to the MSDIN-like toxin family responsible for a large number of food poisoning cases and deaths. The protein is Amanexitide proprotein 1 of Amanita exitialis (Guangzhou destroying angel).